We begin with the raw amino-acid sequence, 356 residues long: Nicotinate-nucleotide--dimethylbenzimidazole phosphoribosyltransferase (356 aa).

E317 functions as the Proton acceptor in the catalytic mechanism.

This sequence belongs to the CobT family. Homodimer.

It catalyses the reaction 5,6-dimethylbenzimidazole + nicotinate beta-D-ribonucleotide = alpha-ribazole 5'-phosphate + nicotinate + H(+). It participates in nucleoside biosynthesis; alpha-ribazole biosynthesis; alpha-ribazole from 5,6-dimethylbenzimidazole: step 1/2. Its function is as follows. Catalyzes the synthesis of alpha-ribazole-5'-phosphate from nicotinate mononucleotide (NAMN) and 5,6-dimethylbenzimidazole (DMB). In Salmonella paratyphi A (strain AKU_12601), this protein is Nicotinate-nucleotide--dimethylbenzimidazole phosphoribosyltransferase.